The primary structure comprises 425 residues: Histidine--tRNA ligase (425 aa).

It belongs to the class-II aminoacyl-tRNA synthetase family. As to quaternary structure, homodimer.

Its subcellular location is the cytoplasm. It carries out the reaction tRNA(His) + L-histidine + ATP = L-histidyl-tRNA(His) + AMP + diphosphate + H(+). The sequence is that of Histidine--tRNA ligase from Shewanella sp. (strain ANA-3).